Reading from the N-terminus, the 90-residue chain is Translation initiation factor IF-1 2 (90 aa).

The S1-like domain maps to 1–72 (MAKEELLELD…TKGRINFRHK (72 aa)).

It belongs to the IF-1 family. Component of the 30S ribosomal translation pre-initiation complex which assembles on the 30S ribosome in the order IF-2 and IF-3, IF-1 and N-formylmethionyl-tRNA(fMet); mRNA recruitment can occur at any time during PIC assembly.

The protein resides in the cytoplasm. Functionally, one of the essential components for the initiation of protein synthesis. Stabilizes the binding of IF-2 and IF-3 on the 30S subunit to which N-formylmethionyl-tRNA(fMet) subsequently binds. Helps modulate mRNA selection, yielding the 30S pre-initiation complex (PIC). Upon addition of the 50S ribosomal subunit IF-1, IF-2 and IF-3 are released leaving the mature 70S translation initiation complex. This chain is Translation initiation factor IF-1 2, found in Paraburkholderia xenovorans (strain LB400).